The following is a 105-amino-acid chain: Vacuolar ATPase assembly integral membrane protein VMA21 homolog (105 aa).

Residues 1 to 26 are disordered; it reads MSTKNKKAAGGNGGAPKQTRQQSHDS. Over 1–36 the chain is Cytoplasmic; the sequence is MSTKNKKAAGGNGGAPKQTRQQSHDSQDYSSFKTVL. The helical transmembrane segment at 37 to 57 threads the bilayer; sequence FYCMLIVFLPVLTFFVLKGFV. The Lumenal segment spans residues 58-68; the sequence is LDQFLNISEVK. The chain crosses the membrane as a helical span at residues 69 to 89; that stretch reads VNIASAVGAVVALHIALGLYI. Over 90–105 the chain is Cytoplasmic; the sequence is YRAYFGAPGSKGSKTD.

It belongs to the VMA21 family.

It is found in the endoplasmic reticulum membrane. The protein resides in the endoplasmic reticulum-Golgi intermediate compartment membrane. Its subcellular location is the cytoplasmic vesicle. It localises to the COPII-coated vesicle membrane. Required for the assembly of the V0 complex of the vacuolar ATPase (V-ATPase) in the endoplasmic reticulum. This chain is Vacuolar ATPase assembly integral membrane protein VMA21 homolog, found in Drosophila sechellia (Fruit fly).